Here is a 294-residue protein sequence, read N- to C-terminus: uncharacterized protein (294 aa).

Disordered stretches follow at residues 1 to 30 (MKRQ…EVSH), 51 to 86 (ALSD…KKRP), and 250 to 294 (DELN…STST). Composition is skewed to polar residues over residues 7–26 (QDSM…TPTK), 66–81 (PYSS…NSST), and 255–277 (PMNN…NLPT).

The protein resides in the nucleus. This is an uncharacterized protein from Schizosaccharomyces pombe (strain 972 / ATCC 24843) (Fission yeast).